A 235-amino-acid polypeptide reads, in one-letter code: KNMITGATQMDGAILVVSAADGPMPQTREHILLAGQVGVPNIVVFMNKQDQVDDEELLELVELEIRELLSSYDFPGDDIPVTAGSALKAVEQLLSDPNTARGSDEWVDKIHALMDDGDKYIPTPSVKVDKPFLMAVEDVFSITGRGTVATGRIERGLVKVGETVQLVGIADTRETTVTGVEMFQKTLDSGMAGDNVGVLLRGVQKEDIERGMVLAKSGSITPHTEFESEVYVLNK.

The tr-type G domain maps to 1-125 (KNMITGATQM…DGDKYIPTPS (125 aa)). 47–50 (NKQD) is a GTP binding site.

Belongs to the TRAFAC class translation factor GTPase superfamily. Classic translation factor GTPase family. EF-Tu/EF-1A subfamily. Monomer.

Its subcellular location is the cytoplasm. The enzyme catalyses GTP + H2O = GDP + phosphate + H(+). GTP hydrolase that promotes the GTP-dependent binding of aminoacyl-tRNA to the A-site of ribosomes during protein biosynthesis. The sequence is that of Elongation factor Tu (tufA) from Leptolyngbya boryana (Plectonema boryanum).